A 66-amino-acid chain; its full sequence is ATP synthase F(0) complex subunit 8 (66 aa).

A helical membrane pass occupies residues 8–24 (TWLTMILSMFLTLFIIF). N6-acetyllysine; alternate is present on K54. K54 carries the post-translational modification N6-succinyllysine; alternate. The residue at position 57 (K57) is an N6-acetyllysine.

The protein belongs to the ATPase protein 8 family. Component of the ATP synthase complex composed at least of ATP5F1A/subunit alpha, ATP5F1B/subunit beta, ATP5MC1/subunit c (homooctomer), MT-ATP6/subunit a, MT-ATP8/subunit 8, ATP5ME/subunit e, ATP5MF/subunit f, ATP5MG/subunit g, ATP5MK/subunit k, ATP5MJ/subunit j, ATP5F1C/subunit gamma, ATP5F1D/subunit delta, ATP5F1E/subunit epsilon, ATP5PF/subunit F6, ATP5PB/subunit b, ATP5PD/subunit d, ATP5PO/subunit OSCP. ATP synthase complex consists of a soluble F(1) head domain (subunits alpha(3) and beta(3)) - the catalytic core - and a membrane F(0) domain - the membrane proton channel (subunits c, a, 8, e, f, g, k and j). These two domains are linked by a central stalk (subunits gamma, delta, and epsilon) rotating inside the F1 region and a stationary peripheral stalk (subunits F6, b, d, and OSCP). Interacts with PRICKLE3.

The protein localises to the mitochondrion membrane. Subunit 8, of the mitochondrial membrane ATP synthase complex (F(1)F(0) ATP synthase or Complex V) that produces ATP from ADP in the presence of a proton gradient across the membrane which is generated by electron transport complexes of the respiratory chain. ATP synthase complex consist of a soluble F(1) head domain - the catalytic core - and a membrane F(1) domain - the membrane proton channel. These two domains are linked by a central stalk rotating inside the F(1) region and a stationary peripheral stalk. During catalysis, ATP synthesis in the catalytic domain of F(1) is coupled via a rotary mechanism of the central stalk subunits to proton translocation. In vivo, can only synthesize ATP although its ATP hydrolase activity can be activated artificially in vitro. Part of the complex F(0) domain. The sequence is that of ATP synthase F(0) complex subunit 8 from Bos mutus grunniens (Wild yak).